Here is a 153-residue protein sequence, read N- to C-terminus: Large ribosomal subunit protein uL22 (153 aa).

This sequence belongs to the universal ribosomal protein uL22 family. Part of the 50S ribosomal subunit.

Its function is as follows. This protein binds specifically to 23S rRNA. It makes multiple contacts with different domains of the 23S rRNA in the assembled 50S subunit and ribosome. Functionally, the globular domain of the protein is located near the polypeptide exit tunnel on the outside of the subunit, while an extended beta-hairpin is found that lines the wall of the exit tunnel in the center of the 70S ribosome. This chain is Large ribosomal subunit protein uL22, found in Methanococcus maripaludis (strain DSM 14266 / JCM 13030 / NBRC 101832 / S2 / LL).